The sequence spans 215 residues: Cytochrome b6 (215 aa).

The helical transmembrane segment at 32–52 (IFYCLGGITLTCFLVQVATGF) threads the bilayer. Cys35 lines the heme c pocket. Heme b is bound by residues His86 and His100. 3 helical membrane-spanning segments follow: residues 90–110 (ASMMVLMMILHVFRVYLTGGF), 116–136 (LTWVTGVVLGVLTASFGVTGY), and 186–206 (LHTFVLPLLTAVFMLMHFPMI). Heme b contacts are provided by His187 and His202.

Belongs to the cytochrome b family. PetB subfamily. In terms of assembly, the 4 large subunits of the cytochrome b6-f complex are cytochrome b6, subunit IV (17 kDa polypeptide, PetD), cytochrome f and the Rieske protein, while the 4 small subunits are PetG, PetL, PetM and PetN. The complex functions as a dimer. Heme b is required as a cofactor. Heme c serves as cofactor.

The protein localises to the plastid. It localises to the chloroplast thylakoid membrane. Its function is as follows. Component of the cytochrome b6-f complex, which mediates electron transfer between photosystem II (PSII) and photosystem I (PSI), cyclic electron flow around PSI, and state transitions. In Populus alba (White poplar), this protein is Cytochrome b6.